A 701-amino-acid polypeptide reads, in one-letter code: Heterodisulfide reductase subunit A-like protein (701 aa).

Residue 152–175 (GGGIAGIFAALDIANAGYKVYLVE) participates in FAD binding. The region spanning 239–268 (KQTWVDWDLCTGCGACTDVCPPKARVPDEF) is the 4Fe-4S ferredoxin-type 1 domain. C248, C251, C254, C326, C627, C630, C633, C637, C660, C663, C666, and C670 together coordinate [4Fe-4S] cluster. 4Fe-4S ferredoxin-type domains follow at residues 618–647 (LVSE…MTKY) and 651–680 (MRAE…LHGF).

The protein belongs to the HdrA family. As to quaternary structure, the heterodisulfide reductase is composed of three subunits; HdlA, HdlB and HdlC. It forms a complex with the F420-non-reducing hydrogenase (Mvh), which provides the reducing equivalents to the heterodisulfide reductase. It depends on [4Fe-4S] cluster as a cofactor. FAD serves as cofactor.

It is found in the cytoplasm. Functionally, has oxidoreductase activity. The Hdl and Mvh subunits may together mediate electron transfer from hydrogen to an unidentified electron acceptor on the cytoplasmic side of the membrane. This is Heterodisulfide reductase subunit A-like protein (hdlA) from Archaeoglobus profundus (strain DSM 5631 / JCM 9629 / NBRC 100127 / Av18).